Here is a 223-residue protein sequence, read N- to C-terminus: MKAMILAAGKGERMRPLTLHTPKPLVPVAGQPLIEYHLRALAAAGVTEVVINHAWLGQQIEDHLGDGSRFGLSIRYSPEGEPLETGGGIFKALPLLGDAPFLLVNGDVWTDYDFARLQAPLQGLAHLVLVDNPGHHGRGDFRLVGEQVVDGDDAPGTLTFSGISVLHPALFEGCQAGAFKLAPLLRQAMAAGKVSGEHYRGHWVDVGTLERLAEAESLIGERA.

Residues 11-13 (GER) and Lys23 each bind UTP. Position 105 (Asn105) interacts with substrate. Asp107 is a binding site for Mg(2+). Residues Asp140 and Asp205 each contribute to the substrate site. A Mg(2+)-binding site is contributed by Asp205.

It belongs to the nucleotidyltransferase MurU family. Monomer. The cofactor is Mg(2+).

The enzyme catalyses N-acetyl-alpha-D-muramate 1-phosphate + UDP + H(+) = UDP-N-acetyl-alpha-D-muramate + phosphate. Its pathway is cell wall biogenesis; peptidoglycan recycling. With respect to regulation, is completely inhibited by EDTA in vitro. Catalyzes the formation of UDP-N-acetylmuramate (UDP-MurNAc), a crucial precursor of the bacterial peptidoglycan cell wall, from UTP and MurNAc-alpha-1P. Is involved in peptidoglycan recycling as part of a cell wall recycling pathway that bypasses de novo biosynthesis of the peptidoglycan precursor UDP-MurNAc. Plays a role in intrinsic resistance to fosfomycin, which targets the de novo synthesis of UDP-MurNAc. Is not able to use GlcNAc-alpha-1P and GalNAc-alpha-1P as substrates. Cannot accept other nucleotide triphosphates (ATP, CTP, TTP, or GTP) than UTP. This Pseudomonas putida (strain ATCC 47054 / DSM 6125 / CFBP 8728 / NCIMB 11950 / KT2440) protein is N-acetylmuramate alpha-1-phosphate uridylyltransferase.